Here is a 330-residue protein sequence, read N- to C-terminus: Cyclin-dependent kinase 7 (330 aa).

Residues 5–289 (YDTIKHLGEG…CTQSLQMEYF (285 aa)) enclose the Protein kinase domain. ATP contacts are provided by residues 11–19 (LGEGQFANV) and Lys34. The active-site Proton acceptor is Asp130. Thr163 is modified (phosphothreonine). Residues 305 to 330 (KKQQPQKRSRRLDDDGTRPVRRLNFD) are disordered. The span at 315 to 330 (RLDDDGTRPVRRLNFD) shows a compositional bias: basic and acidic residues.

The protein belongs to the protein kinase superfamily. CMGC Ser/Thr protein kinase family. CDC2/CDKX subfamily. As to quaternary structure, catalytic component which, in association with cyclin H (cyh-1) and mat1, is likely to form the CAK complex.

It catalyses the reaction L-seryl-[protein] + ATP = O-phospho-L-seryl-[protein] + ADP + H(+). It carries out the reaction L-threonyl-[protein] + ATP = O-phospho-L-threonyl-[protein] + ADP + H(+). The catalysed reaction is [DNA-directed RNA polymerase] + ATP = phospho-[DNA-directed RNA polymerase] + ADP + H(+). In terms of biological role, serine/threonine kinase involved in cell cycle control and in RNA polymerase II-mediated RNA transcription. Required for maintaining chromosome ploidy. May phosphorylate the large subunit of RNA polymerase II, ama-1. The sequence is that of Cyclin-dependent kinase 7 from Caenorhabditis elegans.